Here is a 206-residue protein sequence, read N- to C-terminus: ATP-dependent Clp protease proteolytic subunit (206 aa).

Ser-107 functions as the Nucleophile in the catalytic mechanism. His-132 is an active-site residue.

It belongs to the peptidase S14 family. As to quaternary structure, fourteen ClpP subunits assemble into 2 heptameric rings which stack back to back to give a disk-like structure with a central cavity, resembling the structure of eukaryotic proteasomes.

The protein localises to the cytoplasm. It carries out the reaction Hydrolysis of proteins to small peptides in the presence of ATP and magnesium. alpha-casein is the usual test substrate. In the absence of ATP, only oligopeptides shorter than five residues are hydrolyzed (such as succinyl-Leu-Tyr-|-NHMec, and Leu-Tyr-Leu-|-Tyr-Trp, in which cleavage of the -Tyr-|-Leu- and -Tyr-|-Trp bonds also occurs).. In terms of biological role, cleaves peptides in various proteins in a process that requires ATP hydrolysis. Has a chymotrypsin-like activity. Plays a major role in the degradation of misfolded proteins. This is ATP-dependent Clp protease proteolytic subunit from Idiomarina loihiensis (strain ATCC BAA-735 / DSM 15497 / L2-TR).